Consider the following 199-residue polypeptide: Pyrrolidone-carboxylate peptidase (199 aa).

Catalysis depends on residues Glu-80, Cys-142, and His-166.

It belongs to the peptidase C15 family. As to quaternary structure, homotetramer.

It localises to the cytoplasm. The catalysed reaction is Release of an N-terminal pyroglutamyl group from a polypeptide, the second amino acid generally not being Pro.. Its function is as follows. Removes 5-oxoproline from various penultimate amino acid residues except L-proline. The sequence is that of Pyrrolidone-carboxylate peptidase from Oceanobacillus iheyensis (strain DSM 14371 / CIP 107618 / JCM 11309 / KCTC 3954 / HTE831).